The following is a 611-amino-acid chain: Solute carrier family 23 member 3 (611 aa).

Topologically, residues 1-52 (MSRSPLHPIPLLSEGYQDTPAPLPPLLPPLQNPSSRSWASRVFGPSTWGLSC) are cytoplasmic. A helical transmembrane segment spans residues 53–73 (LLALQHFLVLASLLWASHLLL). At 74–88 (LHGLPPGGLSYPPAQ) the chain is on the extracellular side. The chain crosses the membrane as a helical span at residues 89 to 109 (LLASSFFSCGLSTVLQTWMGS). Topologically, residues 110–168 (RLPLIQAPSLEFLIPALVLTNQKLPLTTKTPGNASLSLPLCSLTRSCHGLELWNTSLRE) are cytoplasmic. Residues 169–189 (VSGAVVVSGLLQGTIGLLGVP) traverse the membrane as a helical segment. Residues 190–191 (GR) are Extracellular-facing. Residues 192-212 (VFPYCGPLVLAPSLVVAGLSA) form a helical membrane-spanning segment. The Cytoplasmic segment spans residues 213–215 (HKE). Residues 216–236 (VAQFCSAHWGLALLLILLMVV) traverse the membrane as a helical segment. The Extracellular segment spans residues 237 to 269 (CSQHLGSCQIPLCSWRPSSTSTHICIPVFRLLS). Residues 270–290 (VLAPVACVWFISAFVGTSVIP) form a helical membrane-spanning segment. Topologically, residues 291–319 (LQLSEPSDAPWFWLPHPGEWEWPLLTPRA) are cytoplasmic. A helical transmembrane segment spans residues 320-340 (LAAGISMALAASTSSLGCYAL). Over 341-358 (CGQLLRLSPPPPHACSRG) the chain is Extracellular. A helical membrane pass occupies residues 359 to 379 (LSLEGLGSVLAGLLGSPLGTA). At 380 to 397 (SSFPNVGTVSLFQTGSRR) the chain is on the cytoplasmic side. Residues 398-417 (VAHLVGLFCMGLGLSPRLAQ) traverse the membrane as a helical segment. Over 418–426 (LFTSIPLPV) the chain is Extracellular. The helical transmembrane segment at 427–449 (LGGVLGVTQAVVLSAGFSSFHLA) threads the bilayer. Residues 450–455 (DIDSGR) lie on the Cytoplasmic side of the membrane. Residues 456 to 475 (NVFIVGFSIFMALLLPRWLR) form a helical membrane-spanning segment. Topologically, residues 476 to 489 (EAPVLLNTGWSPLD) are extracellular. The chain crosses the membrane as a helical span at residues 490–510 (MFLRSLLAEPIFLAGLLGFLL). The Cytoplasmic portion of the chain corresponds to 511–611 (ENTISGTRAE…TASREGVRSQ (101 aa)). The tract at residues 574 to 611 (PEDSGDEGGSSKTGERADLLPNSGESYSTASREGVRSQ) is disordered. Residues 596-605 (SGESYSTASR) show a composition bias toward polar residues.

The protein belongs to the nucleobase:cation symporter-2 (NCS2) (TC 2.A.40) family.

The protein resides in the membrane. Its subcellular location is the cytoplasm. It carries out the reaction hypoxanthine(out) + Na(+)(out) = hypoxanthine(in) + Na(+)(in). Functionally, acts as a sodium-dependent hypoxanthine transporter. May show xanthine-hypoxanthine exchange activity. The sequence is that of Solute carrier family 23 member 3 (Slc23a3) from Mus musculus (Mouse).